A 117-amino-acid polypeptide reads, in one-letter code: Large ribosomal subunit protein bL20c (117 aa).

The protein belongs to the bacterial ribosomal protein bL20 family.

The protein resides in the plastid. It localises to the chloroplast. In terms of biological role, binds directly to 23S ribosomal RNA and is necessary for the in vitro assembly process of the 50S ribosomal subunit. It is not involved in the protein synthesizing functions of that subunit. This is Large ribosomal subunit protein bL20c from Barbarea verna (Land cress).